A 767-amino-acid polypeptide reads, in one-letter code: Lysyl oxidase homolog 2 (767 aa).

An N-terminal signal peptide occupies residues 1–19; the sequence is MLVTHIFLLTLSLSVPTLG. 4 consecutive SRCR domains span residues 51–152, 181–295, 319–418, and 428–537; these read VRLA…VQCS, IRAI…VSCT, VRLR…VRCN, and VRLS…VSCV. Disulfide bonds link cysteine 77–cysteine 141, cysteine 90–cysteine 151, cysteine 121–cysteine 131, cysteine 211–cysteine 284, cysteine 224–cysteine 294, cysteine 258–cysteine 268, cysteine 344–cysteine 407, cysteine 357–cysteine 417, and cysteine 388–cysteine 398. N-linked (GlcNAc...) asparagine glycosylation is present at asparagine 281. N-linked (GlcNAc...) asparagine glycosylation occurs at asparagine 448. 3 cysteine pairs are disulfide-bonded: cysteine 457–cysteine 523, cysteine 470–cysteine 536, and cysteine 504–cysteine 514. The lysyl-oxidase like stretch occupies residues 541–744; the sequence is PDLVLNAALV…WMYNCHIGGS (204 aa). Residues aspartate 542 and leucine 543 each coordinate Ca(2+). Intrachain disulfides connect cysteine 566/cysteine 618, cysteine 572/cysteine 688, cysteine 650/cysteine 666, and cysteine 656/cysteine 678. Histidine 619, histidine 621, and histidine 623 together coordinate Cu cation. Residue asparagine 637 is glycosylated (N-linked (GlcNAc...) asparagine). The lysine tyrosylquinone (Lys-Tyr) cross-link spans 646-682; sequence KASFCLEDSECETDVQKQYACANFGEQGITVGCWDVY. Tyrosine 682 carries the 2',4',5'-topaquinone modification. Glutamate 715, aspartate 717, asparagine 720, and asparagine 721 together coordinate Ca(2+). An intrachain disulfide couples cysteine 725 to cysteine 739.

It belongs to the lysyl oxidase family. Cu cation is required as a cofactor. Lysine tyrosylquinone residue serves as cofactor. The lysine tyrosylquinone cross-link (LTQ) is generated by condensation of the epsilon-amino group of a lysine with a topaquinone produced by oxidation of tyrosine.

It localises to the secreted. The protein resides in the extracellular space. It is found in the extracellular matrix. The protein localises to the basement membrane. Its subcellular location is the nucleus. It localises to the chromosome. The protein resides in the endoplasmic reticulum. It carries out the reaction L-lysyl-[protein] + O2 + H2O = (S)-2-amino-6-oxohexanoyl-[protein] + H2O2 + NH4(+). Functionally, mediates the post-translational oxidative deamination of lysine residues on target proteins leading to the formation of deaminated lysine (allysine). Acts as a transcription corepressor and specifically mediates deamination of trimethylated 'Lys-4' of histone H3 (H3K4me3), a specific tag for epigenetic transcriptional activation. Shows no activity against histone H3 when it is trimethylated on 'Lys-9' (H3K9me3) or 'Lys-27' (H3K27me3) or when 'Lys-4' is monomethylated (H3K4me1) or dimethylated (H3K4me2). Also mediates deamination of methylated TAF10, a member of the transcription factor IID (TFIID) complex, which induces release of TAF10 from promoters, leading to inhibition of TFIID-dependent transcription. LOXL2-mediated deamination of TAF10 results in transcriptional repression of genes required for embryonic stem cell pluripotency. Involved in epithelial to mesenchymal transition (EMT) and participates in repression of E-cadherin, probably by mediating deamination of histone H3. When secreted into the extracellular matrix, promotes cross-linking of extracellular matrix proteins by mediating oxidative deamination of peptidyl lysine residues in precursors to fibrous collagen and elastin. Acts as a regulator of sprouting angiogenesis, probably via collagen IV scaffolding. Acts as a regulator of chondrocyte differentiation, probably by regulating expression of factors that control chondrocyte differentiation. The protein is Lysyl oxidase homolog 2 (loxl2) of Xenopus tropicalis (Western clawed frog).